Consider the following 41-residue polypeptide: Large ribosomal subunit protein bL36 (41 aa).

The protein belongs to the bacterial ribosomal protein bL36 family.

This is Large ribosomal subunit protein bL36 from Rickettsia canadensis (strain McKiel).